The chain runs to 167 residues: MSTTQSERLRGLLEPLVSAQQLDLEEIEVSRAGRRGVLRIIVDSEEGVELDACAELSRAISEKLDETDAMGEGEYVLEVSSPGADRPLTEHRHYVRATGRLARFHLAGDGSGELVARILAVDEEGLDLEVPGVKGRKPTARRLAFDEIARARVEIEFNRKDKKEEEA.

Belongs to the RimP family.

It is found in the cytoplasm. Required for maturation of 30S ribosomal subunits. The protein is Ribosome maturation factor RimP of Streptomyces griseus subsp. griseus (strain JCM 4626 / CBS 651.72 / NBRC 13350 / KCC S-0626 / ISP 5235).